A 187-amino-acid polypeptide reads, in one-letter code: Ponticulin-like protein K (187 aa).

The first 19 residues, 1–19 (MKNLILLFLLISIINLIQS), serve as a signal peptide directing secretion. N-linked (GlcNAc...) asparagine glycosylation is found at Asn-31, Asn-70, Asn-86, Asn-93, Asn-119, Asn-128, Asn-146, Asn-160, and Asn-161. A compositionally biased stretch (low complexity) spans 115 to 146 (PSPSNSSNPSPSPNTTSSSSLSSSSLNSNEPN). The segment at 115–161 (PSPSNSSNPSPSPNTTSSSSLSSSSLNSNEPNQTTKPPKTNEPQKNN) is disordered. A compositionally biased stretch (polar residues) spans 147-161 (QTTKPPKTNEPQKNN). Residue Asn-161 is the site of GPI-like-anchor amidated asparagine attachment. Positions 162 to 187 (STSNIPNFFAIFGFLVLIIFILGDKI) are cleaved as a propeptide — removed in mature form.

It belongs to the ponticulin family. Post-translationally, the GPI-like-anchor contains a phosphoceramide group, rather than a phosphatidyl group.

The protein localises to the cell membrane. Functionally, binds F-actin and nucleates actin assembly. The chain is Ponticulin-like protein K (ponK) from Dictyostelium discoideum (Social amoeba).